A 112-amino-acid polypeptide reads, in one-letter code: Ig kappa chain V-III region PC 7132 (112 aa).

Residues 1-23 (DIVLTQSPASLAVSLGQRATISC) form a framework-1 region. The cysteines at positions 23 and 92 are disulfide-linked. The segment at 24-38 (RASESVDNYGISFMN) is complementarity-determining-1. The framework-2 stretch occupies residues 39–53 (WFQQKPGQPPKLLIY). The tract at residues 54-60 (AASNQGS) is complementarity-determining-2. Residues 61–92 (GVPARFSGSGSGTDFSLNIHPMEEDDTAMYFC) are framework-3. Residues 93-102 (QQSKEVPPYT) form a complementarity-determining-3 region. Positions 103-112 (FGGGTKLEIK) are framework-4.

The polypeptide is Ig kappa chain V-III region PC 7132 (Mus musculus (Mouse)).